Consider the following 100-residue polypeptide: Signal recognition particle 19 kDa protein (100 aa).

The protein belongs to the SRP19 family. As to quaternary structure, part of the signal recognition particle protein translocation system, which is composed of SRP and FtsY. Archaeal SRP consists of a 7S RNA molecule of 300 nucleotides and two protein subunits: SRP54 and SRP19.

Its subcellular location is the cytoplasm. In terms of biological role, involved in targeting and insertion of nascent membrane proteins into the cytoplasmic membrane. Binds directly to 7S RNA and mediates binding of the 54 kDa subunit of the SRP. This Caldivirga maquilingensis (strain ATCC 700844 / DSM 13496 / JCM 10307 / IC-167) protein is Signal recognition particle 19 kDa protein.